Reading from the N-terminus, the 187-residue chain is Elongation factor P (187 aa).

The protein belongs to the elongation factor P family.

Its subcellular location is the cytoplasm. It participates in protein biosynthesis; polypeptide chain elongation. In terms of biological role, involved in peptide bond synthesis. Stimulates efficient translation and peptide-bond synthesis on native or reconstituted 70S ribosomes in vitro. Probably functions indirectly by altering the affinity of the ribosome for aminoacyl-tRNA, thus increasing their reactivity as acceptors for peptidyl transferase. The sequence is that of Elongation factor P from Sphingopyxis alaskensis (strain DSM 13593 / LMG 18877 / RB2256) (Sphingomonas alaskensis).